A 329-amino-acid chain; its full sequence is Malate dehydrogenase (329 aa).

NAD(+) is bound at residue 12–18 (GAAGQIG). Residues Arg-93 and Arg-99 each contribute to the substrate site. NAD(+) is bound by residues Asn-106, Gln-113, and 130–132 (TGN). Asn-132 and Arg-163 together coordinate substrate. His-188 (proton acceptor) is an active-site residue.

This sequence belongs to the LDH/MDH superfamily. MDH type 2 family.

The catalysed reaction is (S)-malate + NAD(+) = oxaloacetate + NADH + H(+). Catalyzes the reversible oxidation of malate to oxaloacetate. This Mycolicibacterium paratuberculosis (strain ATCC BAA-968 / K-10) (Mycobacterium paratuberculosis) protein is Malate dehydrogenase.